Here is a 67-residue protein sequence, read N- to C-terminus: MKAKELHDLSTEELQKKLIDFKDELFRLRFQLATQQLENPMRIRDVRKNIARTQTVLRQRELEAQKA.

This sequence belongs to the universal ribosomal protein uL29 family.

The polypeptide is Large ribosomal subunit protein uL29 (Heliobacterium modesticaldum (strain ATCC 51547 / Ice1)).